A 795-amino-acid chain; its full sequence is Serine/threonine-protein kinase MARK1 (795 aa).

A disordered region spans residues 1–41 (MSARTPLPTVNERDTENHTSVDGYTETHIPPAKSSSRQNLP). Thr5 is modified (phosphothreonine). The Protein kinase domain occupies 60-311 (YRLQKTIGKG…LEQIMKDRWM (252 aa)). ATP is bound by residues 66–74 (IGKGNFAKV) and Lys89. Asp182 acts as the Proton acceptor in catalysis. A Phosphothreonine modification is found at Thr208. Thr215 carries the phosphothreonine; by LKB1 and TAOK1 modification. A Phosphoserine; by GSK3-beta modification is found at Ser219. The UBA domain occupies 329–370 (DLSDAKRIDIMVTMGFARDEINDALVSQKYDEVMATYILLGR). Disordered regions lie at residues 377 to 498 (GGES…SGGS) and 518 to 699 (QNGR…KPRS). Residues Ser382, Ser390, Ser393, Ser403, Ser423, and Ser444 each carry the phosphoserine modification. The span at 387–403 (CQRSRPSSDLNNSTLQS) shows a compositional bias: polar residues. A compositionally biased stretch (basic and acidic residues) spans 447-459 (SEQKEEWGKDTAR). The span at 462-473 (GSTTVGSKSEVT) shows a compositional bias: polar residues. Ser475 carries the phosphoserine modification. Residues 486–495 (TASPSNNVYS) show a composition bias toward polar residues. Low complexity-rich tracts occupy residues 523-547 (SSLTEMSASSMSSAGSTVASAGPSA) and 585-599 (PAASPSAHSISASTP). Ser588 carries the phosphoserine modification. Thr613 bears the Phosphothreonine; by PKC/PRKCZ mark. Residues 647–657 (GTSTGIISKIT) show a composition bias toward polar residues. Composition is skewed to basic and acidic residues over residues 661 to 676 (VRRDPSEGEASGRADT) and 683 to 697 (DPKERDKDEGKEAKP). Residue Ser666 is modified to Phosphoserine. Positions 746–795 (DARQDSLVQWEMEVCKLPRLSLNGVRFKRISGTSIAFKNIASKIANELKL) constitute a KA1 domain.

The protein belongs to the protein kinase superfamily. CAMK Ser/Thr protein kinase family. SNF1 subfamily. As to quaternary structure, interacts with MAPT/TAU. Requires Mg(2+) as cofactor. In terms of processing, phosphorylated at Thr-215 by STK11/LKB1 in complex with STE20-related adapter-alpha (STRADA) pseudo kinase and CAB39. Phosphorylation at Thr-215 by TAOK1 activates the kinase activity, leading to phosphorylation and detachment of MAPT/TAU from microtubules. Phosphorylation at Ser-219 by GSK3-beta (GSK3B) inhibits the kinase activity. Phosphorylation at Thr-613 by PRKCZ/aPKC in polarized epithelial cells inhibits the kinase activity.

It localises to the cell membrane. It is found in the cytoplasm. The protein resides in the cytoskeleton. Its subcellular location is the cell projection. The protein localises to the dendrite. The catalysed reaction is L-seryl-[protein] + ATP = O-phospho-L-seryl-[protein] + ADP + H(+). The enzyme catalyses L-threonyl-[protein] + ATP = O-phospho-L-threonyl-[protein] + ADP + H(+). It carries out the reaction L-seryl-[tau protein] + ATP = O-phospho-L-seryl-[tau protein] + ADP + H(+). It catalyses the reaction L-threonyl-[tau protein] + ATP = O-phospho-L-threonyl-[tau protein] + ADP + H(+). With respect to regulation, inhibited by phosphorylation at Ser-219. Activated by phosphorylation on Thr-215. Its function is as follows. Serine/threonine-protein kinase. Involved in cell polarity and microtubule dynamics regulation. Phosphorylates DCX, MAP2 and MAP4. Phosphorylates the microtubule-associated protein MAPT/TAU. Involved in cell polarity by phosphorylating the microtubule-associated proteins MAP2, MAP4 and MAPT/TAU at KXGS motifs, causing detachment from microtubules, and their disassembly. Involved in the regulation of neuronal migration through its dual activities in regulating cellular polarity and microtubule dynamics, possibly by phosphorylating and regulating DCX. Also acts as a positive regulator of the Wnt signaling pathway, probably by mediating phosphorylation of dishevelled proteins (DVL1, DVL2 and/or DVL3). The polypeptide is Serine/threonine-protein kinase MARK1 (Mus musculus (Mouse)).